Reading from the N-terminus, the 438-residue chain is MQSDELQIPPWESLAEGLGFSNADEEYWWTVFGQPLNKLMDWADYSTSEKYRVLAFIHRYVIPTCGPRPKPNGDQYWDTFMGFDHTPIQVSINFYNSKATVRTGNIPISEASGTTEDPINQKASLDTIASQRHLVPGHNLRLFKHFTDAFFIPNEEANILNAELENRTIAMQAVQCMLSYDFPYRQIQTKVAICPMWKSMQVKRPMGDLMISSIKDLGIDAADYMKSLKVIEDFINSEKAVQSGAYAIFFAFDTMLTDDYQRTRVKIYFATQSTAFNNMVDIFTLGGRLDGPEMQRATKELRKLWMSTMAIPDGLRDDETLPKSPLPCAGVIFNFEIWPGADKPNPKIYLPCAYYGKDDLDIADGMDSFFKDQGWSKSFHSYKDNYIKAFVKDGKVMCRHHDISFSYKGQGAYITAYYKPELSEYADPSVWAPKLFKA.

Residue 80–81 participates in L-tryptophan binding; the sequence is FM. The substrate site is built by arginine 102, lysine 190, arginine 264, lysine 266, tyrosine 268, tyrosine 349, and tyrosine 418.

It belongs to the tryptophan dimethylallyltransferase family.

The protein operates within secondary metabolite biosynthesis. Its function is as follows. Indole diterpene prenyltransferase; part of the gene cluster that mediates the biosynthesis of paxilline, a mycotoxin that acts as an inhibitor of mammalian maxi-K channels. PaxG, the geranylgeranyl diphosphate (GGPP) synthase is proposed to catalyze the first step in paxilline biosynthesis. Condensation of indole-3-glycerol phosphate with GGPP by paxC then forms 3-geranylgeranylindole (3-GGI), followed by epoxidation and cyclization of this intermediate (by paxM and paxB) to form paspaline. Paspaline is subsequently converted to 13-desoxypaxilline by paxP, the latter being then converted to paxilline by paxQ. Finally paxilline can be mono- and di-prenylated by paxD. The chain is Indole diterpene prenyltransferase paxD from Penicillium paxilli.